The following is a 421-amino-acid chain: Lipid II:glycine glycyltransferase (421 aa).

It belongs to the FemABX family. In terms of assembly, monomer.

The protein localises to the cytoplasm. It catalyses the reaction beta-D-GlcNAc-(1-&gt;4)-Mur2Ac(oyl-L-Ala-D-isoglutaminyl-L-Lys-D-Ala-D-Ala)-di-trans,octa-cis-undecaprenyl diphosphate + glycyl-tRNA(Gly) = beta-D-GlcNAc-(1-&gt;4)-Mur2Ac(oyl-L-Ala-D-isoglutaminyl-L-Lys-(N(6)-Gly)-D-Ala-D-Ala)-di-trans,octa-cis-undecaprenyl diphosphate + tRNA(Gly) + H(+). Catalyzes the incorporation of the first glycine of the pentaglycine interpeptide bridge, which is characteristic of the S.aureus peptidoglycan. This glycine is added to the epsilon-amino group of the L-lysine of the membrane-bound lipid II intermediate (GlcNAc-(beta-1,4)-N-acetylmuramic acid(-L-Ala-D-iGln-L-Lys-D-Ala-D-Ala)-pyrophosphoryl-undecaprenol), using glycyl-tRNA(Gly) as donor, in a ribosome-independent mechanism. Involved in methicillin resistance. This chain is Lipid II:glycine glycyltransferase (femX), found in Staphylococcus aureus (strain MRSA252).